The primary structure comprises 109 residues: Nucleoid-associated protein PC1_1077 (109 aa).

The protein belongs to the YbaB/EbfC family. In terms of assembly, homodimer.

The protein localises to the cytoplasm. The protein resides in the nucleoid. Binds to DNA and alters its conformation. May be involved in regulation of gene expression, nucleoid organization and DNA protection. The protein is Nucleoid-associated protein PC1_1077 of Pectobacterium carotovorum subsp. carotovorum (strain PC1).